The sequence spans 1465 residues: DNA polymerase III PolC-type (1465 aa).

Residues 427–583 enclose the Exonuclease domain; sequence YVVFDVETTG…YDAEATGRLL (157 aa).

It belongs to the DNA polymerase type-C family. PolC subfamily.

Its subcellular location is the cytoplasm. It catalyses the reaction DNA(n) + a 2'-deoxyribonucleoside 5'-triphosphate = DNA(n+1) + diphosphate. In terms of biological role, required for replicative DNA synthesis. This DNA polymerase also exhibits 3' to 5' exonuclease activity. The polypeptide is DNA polymerase III PolC-type (Streptococcus pyogenes serotype M2 (strain MGAS10270)).